The chain runs to 798 residues: Integrin beta-1 (798 aa).

The N-terminal stretch at 1-20 is a signal peptide; that stretch reads MNLQLIFWIGLISSVCYVFG. The Extracellular segment spans residues 21–728; it reads QADENRCLKA…ETPECPTGPD (708 aa). A PSI domain is found at 26-76; sequence RCLKANAKSCGECIQAGPNCGWCTNSTFLQEGMPTSARCDDLEALRKKGCH. 28 disulfides stabilise this stretch: C27–C45, C35–C464, C38–C64, C48–C75, C207–C213, C261–C301, C401–C415, C435–C462, C466–C486, C477–C489, C491–C500, C502–C533, C516–C531, C525–C536, C538–C553, C555–C576, C560–C574, C568–C579, C581–C590, C592–C615, C599–C613, C607–C618, C620–C630, C633–C636, C640–C691, C646–C665, C649–C661, and C699–C723. N50 carries an N-linked (GlcNAc...) asparagine glycan. Residues 75–84 show a composition bias toward basic and acidic residues; sequence CHPDDIENPR. The interval 75 to 107 is disordered; the sequence is CHPDDIENPRGSKNIKKNKNVTNRSKGTAEKLQ. Residues N94 and N97 are each glycosylated (N-linked (GlcNAc...) asparagine). Positions 140–378 constitute a VWFA domain; it reads DYPIDLYYLM…QLIIDAYNSL (239 aa). Positions 152 and 154 each coordinate Mg(2+). Ca(2+) contacts are provided by S154, D157, D158, and E189. The interval 207–213 is CX3CL1-binding; that stretch reads CTSEQNC. N-linked (GlcNAc...) asparagine glycosylation is present at N212. 4 residues coordinate Ca(2+): N244, D246, P248, and E249. Residue E249 coordinates Mg(2+). An N-linked (GlcNAc...) asparagine glycan is attached at N269. Residues 295–314 are CX3CL1-binding; that stretch reads LPNDGHCHLENDVYTMSHYY. A362 is a Ca(2+) binding site. N-linked (GlcNAc...) asparagine glycans are attached at residues N363, N406, and N417. The interval 383-465 is interaction with TMEM182; sequence ILENSKLPEG…IILQFICECE (83 aa). I-EGF domains are found at residues 466–501, 502–554, 555–591, and 592–631; these read CQSEGIPSSPKCHDGNGTFECGACRCNEGRVGRHCE, CSTD…KFCE, CDNFNCDRSNGLICGGNGVCKCRVCECNPNYTGSACD, and CSLDTTSCMAVNGQICNGRGVCECGVCKCTDPKFQGPTCE. N481 is a glycosylation site (N-linked (GlcNAc...) asparagine). N-linked (GlcNAc...) asparagine glycosylation occurs at N520. N584 is a glycosylation site (N-linked (GlcNAc...) asparagine). A glycan (N-linked (GlcNAc...) asparagine) is linked at N669. Residues 729–749 traverse the membrane as a helical segment; that stretch reads IIPIVAGVVAGIVLIGLALLL. The Cytoplasmic segment spans residues 750–798; the sequence is IWKLLMIIHDRREFAKFEKEKMNAKWDTGENPIYKSAVTTVVNPKYEGK. The tract at residues 762–767 is signal for sorting from recycling endosomes; interaction with ACAP1; it reads EFAKFE. T777 bears the Phosphothreonine mark. Y783 carries the post-translational modification Phosphotyrosine. S785 is modified (phosphoserine). Residues 785–792 form an interaction with ITGB1BP1 region; the sequence is SAVTTVVN. T789 carries the phosphothreonine modification. The residue at position 794 (K794) is an N6-acetyllysine; alternate. Residue K794 forms a Glycyl lysine isopeptide (Lys-Gly) (interchain with G-Cter in SUMO1); alternate linkage.

Belongs to the integrin beta chain family. Interacts with seprase FAP (seprase); the interaction occurs at the cell surface of invadopodia membrane in a collagen-dependent manner. Heterodimer of an alpha and a beta subunit. Beta-1 associates with either alpha-1, alpha-2, alpha-3, alpha-4, alpha-5, alpha-6, alpha-7, alpha-8, alpha-9, alpha-10, alpha-11 or alpha-V. ITGA6:ITGB1 is found in a complex with CD9; interaction takes place in oocytes and is involved in sperm-egg fusion. Binds LGALS3BP and NMRK2, when associated with alpha-7, but not with alpha-5. Interacts with FLNA, FLNB, FLNC and RANBP9. Interacts with KRT1 in the presence of RACK1 and SRC. Interacts with JAML; integrin alpha-4/beta-1 may regulate leukocyte to endothelial cells adhesion by controlling JAML homodimerization. Interacts with RAB21. Interacts (via the cytoplasmic region) with RAB25 (via the hypervariable C-terminal region). Interacts with MYO10. Interacts with ITGB1BP1 (via C-terminal region); the interaction is a prerequisite for focal adhesion disassembly. Interacts with TLN1; the interaction is prevented by competitive binding of ITGB1BP1. Interacts with ACAP1; required for ITGB1 recycling. Interacts with ASAP3. Interacts with FERMT2; the interaction is inhibited in presence of ITGB1BP1. Interacts with DAB2. Interacts with FGR and HCK. Interacts with alpha-7A and alpha-7B in adult skeletal muscle. Interacts with alpha-7B in cardiomyocytes of adult heart. Interacts with EMP2; the interaction may be direct or indirect and ITGB1 has a heterodimer form. ITGA5:ITGB1 interacts with CCN3. ITGA4:ITGB1 is found in a ternary complex with CX3CR1 and CX3CL1. ITGA5:ITGB1 interacts with FBN1. ITGA5:ITGB1 interacts with IL1B. Interacts with MDK. ITGA4:ITGB1 interacts with MDK; this interaction mediates MDK-induced osteoblast cells migration through PXN phosphorylation. ITGA6:ITGB1 interacts with MDK; this interaction mediates MDK-induced neurite-outgrowth. ITGA5:ITGB1 interacts with ACE2. Interacts with TMEM182 and LAMB1. Interacts with tensin TNS3; TNS3 also interacts with PEAK1, thus acting as an adapter molecule to bridge the association of PEAK1 with ITGB1. Interacts with tensin TNS4; the interaction displaces tensin TNS3 from the ITGB1 cytoplasmic tail and promotes ITGB1 stability. Integrin ITGA9:ITGB1 interacts with SPP1/OPN (via N-terminus). Integrin ITGA9:ITGB1 interacts with TNC/TNFN3 (via the 3rd Fibronectin type-III domain). Integrins ITGA4:ITGB1 and ITGA9:ITGB1 interact with SVEP1 (via Sushi domain 21); thereby inhibit Ca(2+) intracellular signaling and as a result repress vasocontraction. ITGA4:ITGB1 and ITGA5:ITGB1 interacts with SELP. Interacts with CD248. ITGA5:ITGB1 interacts with IGFBP1. ITGA4:ITGB1 interacts with BCAM. Interacts with ADGRG6. In terms of tissue distribution, expressed in the spleen, thymus, alveolar macrophages, bone marrow, liver and kidney.

It is found in the cell membrane. It localises to the cell projection. The protein resides in the invadopodium membrane. Its subcellular location is the ruffle membrane. The protein localises to the recycling endosome. It is found in the melanosome. It localises to the lamellipodium. The protein resides in the ruffle. Its subcellular location is the cell junction. The protein localises to the focal adhesion. In terms of biological role, integrins alpha-1/beta-1, alpha-2/beta-1, alpha-10/beta-1 and alpha-11/beta-1 are receptors for collagen. Integrins alpha-1/beta-1 and alpha-2/beta-2 recognize the proline-hydroxylated sequence G-F-P-G-E-R in collagen. Integrins alpha-2/beta-1, alpha-3/beta-1, alpha-4/beta-1, alpha-5/beta-1, alpha-8/beta-1, alpha-10/beta-1, alpha-11/beta-1 and alpha-V/beta-1 are receptors for fibronectin. Alpha-4/beta-1 recognizes one or more domains within the alternatively spliced CS-1 and CS-5 regions of fibronectin. Integrin alpha-5/beta-1 is a receptor for fibrinogen. Integrin alpha-1/beta-1, alpha-2/beta-1, alpha-6/beta-1 and alpha-7/beta-1 are receptors for lamimin. Integrin alpha-6/beta-1 (ITGA6:ITGB1) is present in oocytes and is involved in sperm-egg fusion. Integrin alpha-4/beta-1 is a receptor for VCAM1 and recognizes the sequence Q-I-D-S in VCAM1. Integrin alpha-9/beta-1 is a receptor for VCAM1, cytotactin and osteopontin. It recognizes the sequence A-E-I-D-G-I-E-L in cytotactin. Integrin alpha-3/beta-1 is a receptor for epiligrin, thrombospondin and CSPG4. Integrin alpha-3/beta-1 provides a docking site for FAP (seprase) at invadopodia plasma membranes in a collagen-dependent manner and hence may participate in the adhesion, formation of invadopodia and matrix degradation processes, promoting cell invasion. Alpha-3/beta-1 may mediate with LGALS3 the stimulation by CSPG4 of endothelial cells migration. Integrin alpha-V/beta-1 is a receptor for vitronectin. Beta-1 integrins recognize the sequence R-G-D in a wide array of ligands. When associated with alpha-7/beta-1 integrin, regulates cell adhesion and laminin matrix deposition. Involved in promoting endothelial cell motility and angiogenesis. Involved in osteoblast compaction through the fibronectin fibrillogenesis cell-mediated matrix assembly process and the formation of mineralized bone nodules. May be involved in up-regulation of the activity of kinases such as PKC via binding to KRT1. Together with KRT1 and RACK1, serves as a platform for SRC activation or inactivation. Plays a mechanistic adhesive role during telophase, required for the successful completion of cytokinesis. ITGA4:ITGB1 binds to fractalkine (CX3CL1) and may act as its coreceptor in CX3CR1-dependent fractalkine signaling. ITGA4:ITGB1 and ITGA5:ITGB1 bind to PLA2G2A via a site (site 2) which is distinct from the classical ligand-binding site (site 1) and this induces integrin conformational changes and enhanced ligand binding to site 1. ITGA5:ITGB1 acts as a receptor for fibrillin-1 (FBN1) and mediates R-G-D-dependent cell adhesion to FBN1. ITGA5:ITGB1 acts as a receptor for fibronectin FN1 and mediates R-G-D-dependent cell adhesion to FN1. ITGA5:ITGB1 is a receptor for IL1B and binding is essential for IL1B signaling. ITGA5:ITGB3 is a receptor for soluble CD40LG and is required for CD40/CD40LG signaling. Plays an important role in myoblast differentiation and fusion during skeletal myogenesis. ITGA9:ITGB1 may play a crucial role in SVEP1/polydom-mediated myoblast cell adhesion. Integrins ITGA9:ITGB1 and ITGA4:ITGB1 repress PRKCA-mediated L-type voltage-gated channel Ca(2+) influx and ROCK-mediated calcium sensitivity in vascular smooth muscle cells via their interaction with SVEP1, thereby inhibit vasocontraction. The sequence is that of Integrin beta-1 (ITGB1) from Sus scrofa (Pig).